Reading from the N-terminus, the 291-residue chain is MPELPEVETVRKGLNQLTLNQEITGGDVLLNRTIAYPFSVGEFVDGIEKNAIATWHRRGKYLLAELSSPCSTSWLGVHLRMTGQLLWLHRDEPLHKHTRVRLFFGDQQELRFVDQRTFGKIWWVPPGVAVESIITGLAKLAADPFSPEFSVEYLASKLKNRRRPIKTALLDQSVVAGLGNIYADEALFKSGILPETLCIDLQLKQIELLRTAIIQVLETSIEAGGTTFSNFLNVKGTNGNYGGVAWVYNRAGEPCRVCGMPIQRIRLAGRSSHFCSECQTLRGVENRERRD.

Pro-2 serves as the catalytic Schiff-base intermediate with DNA. The Proton donor role is filled by Glu-3. The active-site Proton donor; for beta-elimination activity is the Lys-60. DNA contacts are provided by His-97, Arg-116, and Arg-161. Residues 246–280 (WVYNRAGEPCRVCGMPIQRIRLAGRSSHFCSECQT) form an FPG-type zinc finger. The active-site Proton donor; for delta-elimination activity is Arg-270.

It belongs to the FPG family. Monomer. The cofactor is Zn(2+).

It catalyses the reaction Hydrolysis of DNA containing ring-opened 7-methylguanine residues, releasing 2,6-diamino-4-hydroxy-5-(N-methyl)formamidopyrimidine.. The catalysed reaction is 2'-deoxyribonucleotide-(2'-deoxyribose 5'-phosphate)-2'-deoxyribonucleotide-DNA = a 3'-end 2'-deoxyribonucleotide-(2,3-dehydro-2,3-deoxyribose 5'-phosphate)-DNA + a 5'-end 5'-phospho-2'-deoxyribonucleoside-DNA + H(+). In terms of biological role, involved in base excision repair of DNA damaged by oxidation or by mutagenic agents. Acts as a DNA glycosylase that recognizes and removes damaged bases. Has a preference for oxidized purines, such as 7,8-dihydro-8-oxoguanine (8-oxoG). Has AP (apurinic/apyrimidinic) lyase activity and introduces nicks in the DNA strand. Cleaves the DNA backbone by beta-delta elimination to generate a single-strand break at the site of the removed base with both 3'- and 5'-phosphates. This chain is Formamidopyrimidine-DNA glycosylase, found in Nostoc punctiforme (strain ATCC 29133 / PCC 73102).